The chain runs to 130 residues: Small ribosomal subunit protein uS11 (130 aa).

Belongs to the universal ribosomal protein uS11 family. As to quaternary structure, part of the 30S ribosomal subunit. Interacts with proteins S7 and S18. Binds to IF-3.

In terms of biological role, located on the platform of the 30S subunit, it bridges several disparate RNA helices of the 16S rRNA. Forms part of the Shine-Dalgarno cleft in the 70S ribosome. This Thermosynechococcus vestitus (strain NIES-2133 / IAM M-273 / BP-1) protein is Small ribosomal subunit protein uS11.